Here is a 119-residue protein sequence, read N- to C-terminus: Transcription and mRNA export factor SUS1 (119 aa).

The protein belongs to the ENY2 family. In terms of assembly, component of the nuclear pore complex (NPC)-associated TREX-2 complex (transcription and export complex 2), composed of at least SUS1, SAC3, THP1, SEM1, and CDC31. TREX-2 contains 2 SUS1 chains. The TREX-2 complex interacts with the nucleoporin NUP1. Component of the 1.8 MDa SAGA transcription coactivator-HAT complex. SAGA is built of 5 distinct domains with specialized functions. Within the SAGA complex, SUS1, SGF11, SGF73 and UBP8 form an additional subcomplex of SAGA called the DUB module (deubiquitination module). Interacts directly with THP1, SAC3, SGF11, and with the RNA polymerase II.

Its subcellular location is the nucleus. The protein resides in the nucleoplasm. It localises to the cytoplasm. The protein localises to the P-body. In terms of biological role, involved in mRNA export coupled transcription activation by association with both the TREX-2 and the SAGA complexes. At the promoters, SAGA is required for recruitment of the basal transcription machinery. It influences RNA polymerase II transcriptional activity through different activities such as TBP interaction and promoter selectivity, interaction with transcription activators, and chromatin modification through histone acetylation and deubiquitination. Within the SAGA complex, participates in a subcomplex required for deubiquitination of H2B and for the maintenance of steady-state H3 methylation levels. The TREX-2 complex functions in docking export-competent ribonucleoprotein particles (mRNPs) to the nuclear entrance of the nuclear pore complex (nuclear basket). TREX-2 participates in mRNA export and accurate chromatin positioning in the nucleus by tethering genes to the nuclear periphery. May also be involved in cytoplasmic mRNA decay by interaction with components of P-bodies. This is Transcription and mRNA export factor SUS1 from Candida albicans (strain SC5314 / ATCC MYA-2876) (Yeast).